A 42-amino-acid chain; its full sequence is MSNTGTTGRIPLWLVGTVVGTLAIGLLAVFFYGSYVGLGSSL.

Residues 10 to 30 traverse the membrane as a helical segment; sequence IPLWLVGTVVGTLAIGLLAVF.

It belongs to the PsbJ family. PSII is composed of 1 copy each of membrane proteins PsbA, PsbB, PsbC, PsbD, PsbE, PsbF, PsbH, PsbI, PsbJ, PsbK, PsbL, PsbM, PsbT, PsbX, PsbY, PsbZ, Psb30/Ycf12, at least 3 peripheral proteins of the oxygen-evolving complex and a large number of cofactors. It forms dimeric complexes.

The protein resides in the plastid. It localises to the chloroplast thylakoid membrane. One of the components of the core complex of photosystem II (PSII). PSII is a light-driven water:plastoquinone oxidoreductase that uses light energy to abstract electrons from H(2)O, generating O(2) and a proton gradient subsequently used for ATP formation. It consists of a core antenna complex that captures photons, and an electron transfer chain that converts photonic excitation into a charge separation. The chain is Photosystem II reaction center protein J from Chlamydomonas reinhardtii (Chlamydomonas smithii).